Here is a 1232-residue protein sequence, read N- to C-terminus: DNA-directed RNA polymerase subunit beta (1232 aa).

A disordered region spans residues 1170–1232 (SVDEDADELE…LDLDDFGDEH (63 aa)). A compositionally biased stretch (acidic residues) spans 1171-1180 (VDEDADELEV). Positions 1189–1198 (PEEKEEKEKE) are enriched in basic and acidic residues. Residues 1199-1232 (DSDEYDDLREEDVEPDLEELSLDDLDLDDFGDEH) are compositionally biased toward acidic residues.

Belongs to the RNA polymerase beta chain family. The RNAP catalytic core consists of 2 alpha, 1 beta, 1 beta' and 1 omega subunit. When a sigma factor is associated with the core the holoenzyme is formed, which can initiate transcription.

It carries out the reaction RNA(n) + a ribonucleoside 5'-triphosphate = RNA(n+1) + diphosphate. Functionally, DNA-dependent RNA polymerase catalyzes the transcription of DNA into RNA using the four ribonucleoside triphosphates as substrates. In Clostridium botulinum (strain Hall / ATCC 3502 / NCTC 13319 / Type A), this protein is DNA-directed RNA polymerase subunit beta.